A 548-amino-acid chain; its full sequence is Serine/threonine-protein phosphatase 2A 56 kDa regulatory subunit delta 1 isoform (548 aa).

Residues 1 to 10 show a composition bias toward basic residues; the sequence is MKGIKSKMLS. Positions 1–75 are disordered; that stretch reads MKGIKSKMLS…KKVPIDTTPT (75 aa). Over residues 27–39 the composition is skewed to basic and acidic residues; sequence KKSNSHDSSKAPK. Y96 is modified (phosphotyrosine). 3 positions are modified to phosphoserine: S99, S109, and S542.

The protein belongs to the phosphatase 2A regulatory subunit B family. As to quaternary structure, PP2A consists of a common heterodimeric core enzyme, composed of a 36 kDa catalytic subunit (subunit C) and a 65 kDa constant regulatory subunit (PR65 or subunit A), that associates with a variety of regulatory subunits. Proteins that associate with the core dimer include three families of regulatory subunits B (the R2/B/PR55/B55, R3/B''/PR72/PR130/PR59 and R5/B'/B56 families), the 48 kDa variable regulatory subunit, viral proteins, and cell signaling molecules.

It localises to the cytoplasm. The protein localises to the nucleus. Functionally, the B regulatory subunit might modulate substrate selectivity and catalytic activity, and might also direct the localization of the catalytic enzyme to a particular subcellular compartment. Has a role in cell shape control and septum formation. This chain is Serine/threonine-protein phosphatase 2A 56 kDa regulatory subunit delta 1 isoform (par1), found in Schizosaccharomyces pombe (strain 972 / ATCC 24843) (Fission yeast).